Here is a 239-residue protein sequence, read N- to C-terminus: Phosphoglycolate phosphatase (239 aa).

Asp-9 (nucleophile) is an active-site residue. Positions 9 and 11 each coordinate Mg(2+). Lys-157 provides a ligand contact to substrate. Mg(2+)-binding residues include Asp-180 and Asp-184.

This sequence belongs to the archaeal SPP-like hydrolase family. The cofactor is Mg(2+).

The enzyme catalyses 2-phosphoglycolate + H2O = glycolate + phosphate. Its function is as follows. Catalyzes the dephosphorylation of 2-phosphoglycolate. This Thermococcus kodakarensis (strain ATCC BAA-918 / JCM 12380 / KOD1) (Pyrococcus kodakaraensis (strain KOD1)) protein is Phosphoglycolate phosphatase.